Consider the following 260-residue polypeptide: Tropinone reductase homolog At1g07450 (260 aa).

14–38 (LVTGGSKGIGYAIVEELVGFGARVH) contributes to the NADP(+) binding site. Residue S147 coordinates substrate. Y159 functions as the Proton acceptor in the catalytic mechanism.

Belongs to the short-chain dehydrogenases/reductases (SDR) family. SDR65C subfamily.

This Arabidopsis thaliana (Mouse-ear cress) protein is Tropinone reductase homolog At1g07450.